The following is a 351-amino-acid chain: Ribosomal RNA small subunit methyltransferase H (351 aa).

Residues 48–50, Asp67, Phe94, Asp115, and Gln122 each bind S-adenosyl-L-methionine; that span reads GGY. The interval 274–351 is disordered; it reads AAQASRHVPG…PAPQGRGPRR (78 aa).

The protein belongs to the methyltransferase superfamily. RsmH family.

The protein localises to the cytoplasm. It carries out the reaction cytidine(1402) in 16S rRNA + S-adenosyl-L-methionine = N(4)-methylcytidine(1402) in 16S rRNA + S-adenosyl-L-homocysteine + H(+). Specifically methylates the N4 position of cytidine in position 1402 (C1402) of 16S rRNA. The polypeptide is Ribosomal RNA small subunit methyltransferase H (Methylorubrum extorquens (strain PA1) (Methylobacterium extorquens)).